Here is a 526-residue protein sequence, read N- to C-terminus: MRKSISTFILLSVLSVGQLVAARPRSTNAPPRRRTPQPRRTTSLFINPPALPDLPTVQAVDKLDDALDIDNIQSDILVGMKKTKELFFFFGVEDAATFKSKLASDILPLITTTTEILSTDTQPITAVNIAFSHTGLVALGVNDDIGDTDFVSGQFSEATTVGDRPTLWDPAFAGTKIHGVFLLASNTTEDINTELANIQSILGSSITEIHRLQGAARPGAEEGHEHFGFLDGISQPAVNGFTDTVLPGQTPVDPGLFLLGESGDPSQDSRPSWAVDGSFLVFRQLQQFVPEFNQFLADHPLDIPGRTAEEGSELLGARMVGRWKSGAPVFLSPTQDDPVLGADKNRNNDFNYLVASDPDPGTENHFNQTACPFGAHIRKVHPRGDLSPSAENPHFIIRSSIPYGPEVTDAEAASSTTSVDRGLAFVSYQSNIFNGFVFLQSIWINNVNFIFGKVDPTIGVDPIIGTLGGGPHNISGLNPLIPVNETVDFQDDPWNDVVIPRDFVVSHGGEYFFSPSLSGISAIAAA.

A signal peptide spans 1-21 (MRKSISTFILLSVLSVGQLVA). The propeptide occupies 22-63 (ARPRSTNAPPRRRTPQPRRTTSLFINPPALPDLPTVQAVDKL). Asn186 is a glycosylation site (N-linked (GlcNAc...) asparagine). Asp231 (proton acceptor) is an active-site residue. Asn367 carries N-linked (GlcNAc...) asparagine glycosylation. His376 is a heme binding site. N-linked (GlcNAc...) asparagine glycosylation is found at Asn473 and Asn484.

Belongs to the DyP-type peroxidase family. Requires heme b as cofactor.

It is found in the secreted. The catalysed reaction is Reactive Blue 5 + 2 H2O2 = 2,2'-disulfonyl azobenzene + 3-[(4-amino-6-chloro-1,3,5-triazin-2-yl)amino]benzenesulfonate + phthalate + 2 H2O + 2 H(+). It carries out the reaction 2 a phenolic donor + H2O2 = 2 a phenolic radical donor + 2 H2O. Manganese-independent peroxidase that is able to convert a large number of compounds, but its physiological substrate is not known. In addition to classic peroxidase substrates (e.g. 2,6-dimethoxyphenol), oxidizes dyes such as Reactive Blue 5 and Reactive Black 5. This chain is Dye-decolorizing peroxidase, found in Mycena epipterygia (Yellow-stemmed mycena).